A 217-amino-acid chain; its full sequence is Ras-related protein RABA1e (217 aa).

20-27 contacts GTP; that stretch reads GDSGVGKS. The short motif at 42–50 is the Effector region element; sequence SKSTIGVEF. GTP contacts are provided by residues 68-72, 126-129, and 156-157; these read DTAGQ, NKAD, and SA. Residues Cys-214 and Cys-215 are each lipidated (S-geranylgeranyl cysteine).

It belongs to the small GTPase superfamily. Rab family.

The protein localises to the cell membrane. Its function is as follows. Intracellular vesicle trafficking and protein transport. This Arabidopsis thaliana (Mouse-ear cress) protein is Ras-related protein RABA1e (RABA1E).